Here is a 336-residue protein sequence, read N- to C-terminus: tRNA-cytidine(32) 2-sulfurtransferase (336 aa).

The segment at 1-34 (MNAPEILNGAATASPADATEATQTAARAKTPLTR) is disordered. Residues 10–22 (AATASPADATEAT) are compositionally biased toward low complexity. Residues 75 to 80 (SGGKDS) carry the PP-loop motif motif. [4Fe-4S] cluster is bound by residues C150, C153, and C241.

The protein belongs to the TtcA family. As to quaternary structure, homodimer. Mg(2+) is required as a cofactor. Requires [4Fe-4S] cluster as cofactor.

It localises to the cytoplasm. The enzyme catalyses cytidine(32) in tRNA + S-sulfanyl-L-cysteinyl-[cysteine desulfurase] + AH2 + ATP = 2-thiocytidine(32) in tRNA + L-cysteinyl-[cysteine desulfurase] + A + AMP + diphosphate + H(+). It participates in tRNA modification. Its function is as follows. Catalyzes the ATP-dependent 2-thiolation of cytidine in position 32 of tRNA, to form 2-thiocytidine (s(2)C32). The sulfur atoms are provided by the cysteine/cysteine desulfurase (IscS) system. The protein is tRNA-cytidine(32) 2-sulfurtransferase of Paraburkholderia phytofirmans (strain DSM 17436 / LMG 22146 / PsJN) (Burkholderia phytofirmans).